A 152-amino-acid polypeptide reads, in one-letter code: Nucleoside diphosphate kinase B (152 aa).

Residues 1–66 are interaction with AKAP13; the sequence is MAHAERTFIA…DRPFFPGLVK (66 aa). Residues K12, F60, R88, T94, R105, and N115 each coordinate ATP. H118 serves as the catalytic Pros-phosphohistidine intermediate.

This sequence belongs to the NDK family. In terms of assembly, hexamer of two different chains: An and B (A6, A5B, A4B2, A3B3, A2B4, AB5, B6). Interacts with CAPN8. Interacts with AKAP13. Interacts with ITGB1BP1 (via C-terminal domain region). Interacts with BCL2L10. Mg(2+) serves as cofactor.

The protein resides in the cytoplasm. Its subcellular location is the cell projection. It is found in the lamellipodium. The protein localises to the ruffle. It localises to the nucleus. It catalyses the reaction a 2'-deoxyribonucleoside 5'-diphosphate + ATP = a 2'-deoxyribonucleoside 5'-triphosphate + ADP. It carries out the reaction a ribonucleoside 5'-diphosphate + ATP = a ribonucleoside 5'-triphosphate + ADP. The catalysed reaction is ATP + protein L-histidine = ADP + protein N-phospho-L-histidine.. In terms of biological role, major role in the synthesis of nucleoside triphosphates other than ATP. The ATP gamma phosphate is transferred to the NDP beta phosphate via a ping-pong mechanism, using a phosphorylated active-site intermediate. Negatively regulates Rho activity by interacting with AKAP13/LBC. Acts as a transcriptional activator of the MYC gene; binds DNA non-specifically. Binds to both single-stranded guanine- and cytosine-rich strands within the nuclease hypersensitive element (NHE) III(1) region of the MYC gene promoter. Does not bind to duplex NHE III(1). Has G-quadruplex (G4) DNA-binding activity, which is independent of its nucleotide-binding and kinase activity. Binds both folded and unfolded G4 with similar low nanomolar affinities. Stabilizes folded G4s regardless of whether they are prefolded or not. Exhibits histidine protein kinase activity. In Bos taurus (Bovine), this protein is Nucleoside diphosphate kinase B (NME2).